The sequence spans 146 residues: Hemoglobin subunit beta (146 aa).

An N-acetylvaline modification is found at V1. One can recognise a Globin domain in the interval 2-146; it reads HLSGEEKGAV…VATALAHKYH (145 aa). Position 12 is a phosphothreonine (T12). Position 44 is a phosphoserine (S44). Position 59 is an N6-acetyllysine (K59). H63 is a heme b binding site. K82 is subject to N6-acetyllysine. Position 92 (H92) interacts with heme b. The residue at position 93 (C93) is an S-nitrosocysteine. The residue at position 144 (K144) is an N6-acetyllysine.

This sequence belongs to the globin family. As to quaternary structure, heterotetramer of two alpha chains and two beta chains. Red blood cells.

Involved in oxygen transport from the lung to the various peripheral tissues. This is Hemoglobin subunit beta (HBB) from Tadarida brasiliensis (Brazilian free-tailed bat).